The chain runs to 186 residues: Acireductone dioxygenase (186 aa).

The Fe(2+) site is built by His-103, His-105, Glu-109, and His-147. Residues His-103, His-105, Glu-109, and His-147 each contribute to the Ni(2+) site.

This sequence belongs to the acireductone dioxygenase (ARD) family. Monomer. Fe(2+) is required as a cofactor. Requires Ni(2+) as cofactor.

It carries out the reaction 1,2-dihydroxy-5-(methylsulfanyl)pent-1-en-3-one + O2 = 3-(methylsulfanyl)propanoate + CO + formate + 2 H(+). The enzyme catalyses 1,2-dihydroxy-5-(methylsulfanyl)pent-1-en-3-one + O2 = 4-methylsulfanyl-2-oxobutanoate + formate + 2 H(+). It participates in amino-acid biosynthesis; L-methionine biosynthesis via salvage pathway; L-methionine from S-methyl-5-thio-alpha-D-ribose 1-phosphate: step 5/6. Functionally, catalyzes 2 different reactions between oxygen and the acireductone 1,2-dihydroxy-3-keto-5-methylthiopentene (DHK-MTPene) depending upon the metal bound in the active site. Fe-containing acireductone dioxygenase (Fe-ARD) produces formate and 2-keto-4-methylthiobutyrate (KMTB), the alpha-ketoacid precursor of methionine in the methionine recycle pathway. Ni-containing acireductone dioxygenase (Ni-ARD) produces methylthiopropionate, carbon monoxide and formate, and does not lie on the methionine recycle pathway. The sequence is that of Acireductone dioxygenase from Synechococcus sp. (strain CC9605).